Here is a 540-residue protein sequence, read N- to C-terminus: Pentatricopeptide repeat-containing protein At1g80880, mitochondrial (540 aa).

A mitochondrion-targeting transit peptide spans 1–87 (MAAIVAIGRK…ETFDINLTAL (87 aa)). PPR repeat units follow at residues 154-184 (DQKSCDLMIWVLGNHQKFNIAWCLIRDMFNV), 188-222 (TRKAMFLMMDRYAAANDTSQAIRTFDIMDKFKHTP), 223-253 (YDEAFQGLLCALCRHGHIEKAEEFMLASKKL), 257-292 (DVEGFNVILNGWCNIWTDVTEAKRIWREMGNYCITP), 293-327 (NKDSYSHMISCFSKVGNLFDSLRLYDEMKKRGLAP), 328-362 (GIEVYNSLVYVLTREDCFDEAMKLMKKLNEEGLKP), 363-397 (DSVTYNSMIRPLCEAGKLDVARNVLATMISENLSP), 402-428 (FHAFLEAVNFEKTLEVLGQMKISDLGP), 429-463 (TEETFLLILGKLFKGKQPENALKIWAEMDRFEIVA), and 464-498 (NPALYLATIQGLLSCGWLEKAREIYSEMKSKGFVG). Positions 514–540 (VRKSKRMNLQKVGSQEGYKGQRSVDRK) are disordered.

Belongs to the PPR family. P subfamily.

The protein resides in the mitochondrion. The protein is Pentatricopeptide repeat-containing protein At1g80880, mitochondrial of Arabidopsis thaliana (Mouse-ear cress).